The chain runs to 251 residues: Malonyl-[acyl-carrier protein] O-methyltransferase (251 aa).

Belongs to the methyltransferase superfamily.

It carries out the reaction malonyl-[ACP] + S-adenosyl-L-methionine = malonyl-[ACP] methyl ester + S-adenosyl-L-homocysteine. Its pathway is cofactor biosynthesis; biotin biosynthesis. In terms of biological role, converts the free carboxyl group of a malonyl-thioester to its methyl ester by transfer of a methyl group from S-adenosyl-L-methionine (SAM). It allows to synthesize pimeloyl-ACP via the fatty acid synthetic pathway. This Salmonella typhimurium (strain LT2 / SGSC1412 / ATCC 700720) protein is Malonyl-[acyl-carrier protein] O-methyltransferase.